A 146-amino-acid chain; its full sequence is Hemoglobin subunit beta (146 aa).

Positions H2 to H146 constitute a Globin domain. Heme b contacts are provided by H63 and H92.

This sequence belongs to the globin family. In terms of assembly, heterotetramer of two alpha chains and two beta chains. Red blood cells.

Functionally, involved in oxygen transport from the lung to the various peripheral tissues. The polypeptide is Hemoglobin subunit beta (HBB) (Columba livia (Rock dove)).